The following is a 125-amino-acid chain: Multifunctional methyltransferase subunit TRM112-like protein (125 aa).

The region spanning 2–119 (KLLTHNLLSS…SRGIPNMLLS (118 aa)) is the TRM112 domain. Phosphoserine occurs at positions 119 and 125.

Belongs to the TRM112 family. Part of the heterodimeric BUD23-TRM112 methyltransferase complex; this heterodimerization is necessary for the metabolic stability and activity of the catalytic subunit BUD23. Part of the heterodimeric N6AMT1-TRM112 methyltransferase complex; this heterodimerization is necessary for S-adenosyl-L-methionine-binding to N6AMT1/HEMK2. Part of the heterodimeric ALKBH8-TRM112 methyltransferase complex. Part of the heterodimeric METTL5-TRM112 methyltransferase complex; this heterodimerization is necessary for the stability of the catalytic subunit METTL5. Part of the heterodimeric THUMPD3-TRM112 methyltransferase complex; this complex forms an active tRNA methyltransferase, where TRMT112 acts as an activator of the catalytic subunit THUMPD3. Part of the heterodimeric THUMPD2-TRM112 methyltransferase complex; this complex forms an active tRNA methyltransferase, where TRMT112 acts as an activator of the catalytic subunit THUMPD2. Part of the heterodimeric TRMT11-TRM112 methyltransferase complex; this complex forms an active tRNA methyltransferase, where TRMT112 acts as an activator of the catalytic subunit TRMT11.

The protein resides in the nucleus. The protein localises to the nucleoplasm. It is found in the cytoplasm. Its subcellular location is the perinuclear region. Functionally, acts as an activator of both rRNA/tRNA and protein methyltransferases. Together with methyltransferase BUD23, methylates the N(7) position of a guanine in 18S rRNA. The heterodimer with N6AMT1/HEMK2 catalyzes N5-methylation of ETF1 on 'Gln-185', using S-adenosyl L-methionine as methyl donor. The heterodimer with N6AMT1/HEMK2 also monomethylates 'Lys-12' of histone H4 (H4K12me1). The heterodimer with ALKBH8 catalyzes the methylation of 5-carboxymethyl uridine to 5-methylcarboxymethyl uridine at the wobble position of the anticodon loop in target tRNA species. Together with methyltransferase THUMPD3, catalyzes the formation of N(2)-methylguanosine at position 6 in a broad range of tRNA substrates and at position 7 of tRNA(Trp). Involved in the pre-rRNA processing steps leading to small-subunit rRNA production. Together with methyltransferase METTL5, specifically methylates the 6th position of adenine in position 1832 of 18S rRNA. This is Multifunctional methyltransferase subunit TRM112-like protein from Homo sapiens (Human).